A 479-amino-acid polypeptide reads, in one-letter code: Sulfate adenylyltransferase subunit 1 (479 aa).

The 215-residue stretch at Lys-25–Arg-239 folds into the tr-type G domain. The tract at residues Gly-34–Ser-41 is G1. Gly-34–Ser-41 contacts GTP. A G2 region spans residues Gly-92–Asp-96. Positions Asp-113–Gly-116 are G3. Residues Asp-113 to His-117 and Asn-168 to Asp-171 each bind GTP. Residues Asn-168–Asp-171 form a G4 region. A G5 region spans residues Ser-206–Leu-208.

The protein belongs to the TRAFAC class translation factor GTPase superfamily. Classic translation factor GTPase family. CysN/NodQ subfamily. In terms of assembly, heterodimer composed of CysD, the smaller subunit, and CysN.

The enzyme catalyses sulfate + ATP + H(+) = adenosine 5'-phosphosulfate + diphosphate. Its pathway is sulfur metabolism; hydrogen sulfide biosynthesis; sulfite from sulfate: step 1/3. Its function is as follows. With CysD forms the ATP sulfurylase (ATPS) that catalyzes the adenylation of sulfate producing adenosine 5'-phosphosulfate (APS) and diphosphate, the first enzymatic step in sulfur assimilation pathway. APS synthesis involves the formation of a high-energy phosphoric-sulfuric acid anhydride bond driven by GTP hydrolysis by CysN coupled to ATP hydrolysis by CysD. The polypeptide is Sulfate adenylyltransferase subunit 1 (Salmonella typhi).